The chain runs to 834 residues: 1,4-alpha-glucan branching enzyme GlgB (834 aa).

Asp511 serves as the catalytic Nucleophile. Glu565 functions as the Proton donor in the catalytic mechanism.

This sequence belongs to the glycosyl hydrolase 13 family. GlgB subfamily. As to quaternary structure, monomer.

It catalyses the reaction Transfers a segment of a (1-&gt;4)-alpha-D-glucan chain to a primary hydroxy group in a similar glucan chain.. Its pathway is glycan biosynthesis; glycogen biosynthesis. In terms of biological role, catalyzes the formation of the alpha-1,6-glucosidic linkages in glycogen by scission of a 1,4-alpha-linked oligosaccharide from growing alpha-1,4-glucan chains and the subsequent attachment of the oligosaccharide to the alpha-1,6 position. This is 1,4-alpha-glucan branching enzyme GlgB (glgB) from Burkholderia thailandensis (strain ATCC 700388 / DSM 13276 / CCUG 48851 / CIP 106301 / E264).